A 440-amino-acid chain; its full sequence is ATP-dependent protease ATPase subunit HslU (440 aa).

ATP contacts are provided by residues isoleucine 18 and 60–65; that span reads GVGKTE. The segment at 138-159 is disordered; that stretch reads RAQSFDQEDPSAGTRQKLRKKL. ATP contacts are provided by aspartate 252, glutamate 318, and arginine 390.

This sequence belongs to the ClpX chaperone family. HslU subfamily. A double ring-shaped homohexamer of HslV is capped on each side by a ring-shaped HslU homohexamer. The assembly of the HslU/HslV complex is dependent on binding of ATP.

The protein localises to the cytoplasm. In terms of biological role, ATPase subunit of a proteasome-like degradation complex; this subunit has chaperone activity. The binding of ATP and its subsequent hydrolysis by HslU are essential for unfolding of protein substrates subsequently hydrolyzed by HslV. HslU recognizes the N-terminal part of its protein substrates and unfolds these before they are guided to HslV for hydrolysis. This Alkalilimnicola ehrlichii (strain ATCC BAA-1101 / DSM 17681 / MLHE-1) protein is ATP-dependent protease ATPase subunit HslU.